Reading from the N-terminus, the 972-residue chain is DNA topoisomerase 1 (972 aa).

Disordered stretches follow at residues 1–210 (MSGD…VFVK) and 300–416 (HEQS…RQKA). A compositionally biased stretch (polar residues) spans 11–31 (IHIQNGGSCEVVQSNGVTTNG). Over residues 32-50 (HGHHHHHHSSSSSSSKHKS) the composition is skewed to basic residues. 3 stretches are compositionally biased toward basic and acidic residues: residues 51 to 65 (SSKD…EHKS), 72 to 86 (SKEH…DRHK), and 93 to 103 (KHRDKDKERDG). Over residues 104–114 (SSNSHRSGSSS) the composition is skewed to low complexity. Over residues 125–138 (SKHKSSSGHHKRSS) the composition is skewed to basic residues. A compositionally biased stretch (basic and acidic residues) spans 139-151 (KDKERRDKDKDRG). Over residues 173-183 (SHKSSSSSSSS) the composition is skewed to low complexity. Ser303 is modified (phosphoserine). Tyr304 carries the post-translational modification Phosphotyrosine. Residues 316–330 (HDDDADEMNDDEEDV) are compositionally biased toward acidic residues. 3 interaction with DNA regions span residues 648 to 649 (KY), 711 to 716 (RAGNEK), and 807 to 809 (TAK). Residues 655-972 (SSKLKGEKDH…VHMADENYRF (318 aa)) form the Topo IB-type catalytic domain. Residue Tyr930 is the O-(3'-phospho-DNA)-tyrosine intermediate of the active site.

It belongs to the type IB topoisomerase family. As to quaternary structure, interacts with Topors.

It localises to the nucleus. Its subcellular location is the cytoplasm. The catalysed reaction is ATP-independent breakage of single-stranded DNA, followed by passage and rejoining.. Releases the supercoiling and torsional tension of DNA introduced during the DNA replication and transcription by transiently cleaving and rejoining one strand of the DNA duplex. Introduces a single-strand break via transesterification at a target site in duplex DNA. The scissile phosphodiester is attacked by the catalytic tyrosine of the enzyme, resulting in the formation of a DNA-(3'-phosphotyrosyl)-enzyme intermediate and the expulsion of a 5'-OH DNA strand. The free DNA strand then undergoes passage around the unbroken strand thus removing DNA supercoils. Finally, in the religation step, the DNA 5'-OH attacks the covalent intermediate to expel the active-site tyrosine and restore the DNA phosphodiester backbone. This is DNA topoisomerase 1 from Drosophila melanogaster (Fruit fly).